The following is a 775-amino-acid chain: Homoaconitase, mitochondrial (775 aa).

The transit peptide at 1–29 (MQSRLMPSGGPGRRWAFLRVPSTPQRRAF) directs the protein to the mitochondrion. [4Fe-4S] cluster is bound by residues Cys-392, Cys-461, and Cys-464.

It belongs to the aconitase/IPM isomerase family. It depends on [4Fe-4S] cluster as a cofactor.

It localises to the mitochondrion. The catalysed reaction is (2R,3S)-homoisocitrate = cis-homoaconitate + H2O. It functions in the pathway amino-acid biosynthesis; L-lysine biosynthesis via AAA pathway; L-alpha-aminoadipate from 2-oxoglutarate: step 3/5. Catalyzes the reversible hydration of cis-homoaconitate to (2R,3S)-homoisocitrate, a step in the alpha-aminoadipate pathway for lysine biosynthesis. This Aspergillus oryzae (strain ATCC 42149 / RIB 40) (Yellow koji mold) protein is Homoaconitase, mitochondrial (lys4).